We begin with the raw amino-acid sequence, 199 residues long: MYEGIVQELIDELGRLPGIGPKSAQRIAFHILQTETFDVSRLAEVLTVVRDKVRFCAICGNVSEKETCGICRDPRRSPATICVVEEAKDVVAIERTREFRGLYHVLGGAISPIDGIGPDDLRIRQLMQRLADATVTEVIIATDPNLEGEATATYLSRLLSTFDIRVTRLASGLPVGGDLEYADEVTLGRAFEGRRLVGE.

The C4-type zinc-finger motif lies at C56 to C71. Residues A79–P174 form the Toprim domain.

It belongs to the RecR family.

In terms of biological role, may play a role in DNA repair. It seems to be involved in an RecBC-independent recombinational process of DNA repair. It may act with RecF and RecO. The sequence is that of Recombination protein RecR from Clavibacter michiganensis subsp. michiganensis (strain NCPPB 382).